The chain runs to 478 residues: Putative malate transporter YflS (478 aa).

Helical transmembrane passes span 12–31, 41–57, 64–81, 96–118, 187–209, 222–244, 277–296, 300–319, 332–354, 364–386, 398–420, and 450–472; these read AVKLVPLLITVAVGLIIWFI, AWHLFAIFVATIIGFIS, AIAIFALAVTALTGTLSI, IVIAFFISRGFIKTGLGARISYV, GFQGNLITSAMFLTAMAANPLIA, WTSWAIAAIVPGLVSLIITPLVI, LSMVIVFLLVLVLWIFGGSF, ATTTALIGLAVLLLSQVLTW, LTWFAALVMLANFLNELGMVSWF, GFSWIVAFIILIVVYYYSHYFFA, AFLAVVVAAGAPPLLAALSLAFI, and WSIGFILSIVHIIVWLVIGGLWW.

It belongs to the SLC13A/DASS transporter (TC 2.A.47) family. DIT1 subfamily.

It is found in the cell membrane. Its function is as follows. Might be a malate transporter. The sequence is that of Putative malate transporter YflS (yflS) from Bacillus subtilis (strain 168).